We begin with the raw amino-acid sequence, 486 residues long: Kynurenine 3-monooxygenase (486 aa).

2 consecutive transmembrane segments (helical) span residues 401 to 424 (LLFW…HMRY) and 437 to 459 (ILTR…LCYR).

The protein belongs to the aromatic-ring hydroxylase family. KMO subfamily. It depends on FAD as a cofactor.

Its subcellular location is the mitochondrion. The protein resides in the membrane. It carries out the reaction L-kynurenine + NADPH + O2 + H(+) = 3-hydroxy-L-kynurenine + NADP(+) + H2O. It participates in cofactor biosynthesis; NAD(+) biosynthesis; quinolinate from L-kynurenine: step 1/3. Functionally, catalyzes the hydroxylation of L-kynurenine (L-Kyn) to form 3-hydroxy-L-kynurenine (L-3OHKyn). Required for synthesis of quinolinic acid. The polypeptide is Kynurenine 3-monooxygenase (kh) (Anopheles gambiae (African malaria mosquito)).